The primary structure comprises 448 residues: Protein W (448 aa).

Disordered stretches follow at residues 26 to 104 (KTYG…DPDD) and 193 to 406 (FVPK…KKGA). 2 stretches are compositionally biased toward polar residues: residues 28-37 (YGRSSIQQPS) and 77-96 (DLSSVTSSDGTIGQRVSNTR). The segment covering 240–252 (SDDEDENQLEYED) has biased composition (acidic residues). Residue serine 257 is modified to Phosphoserine; by host. Residues 296 to 317 (FPEKEETPDVRRKDSLMQDSCK) show a composition bias toward basic and acidic residues. At serine 350 the chain carries Phosphoserine; by host.

This is Protein W (P/V/C) from Hendra virus (isolate Horse/Autralia/Hendra/1994).